Consider the following 209-residue polypeptide: Dual specificity protein phosphatase 22 (209 aa).

A Tyrosine-protein phosphatase domain is found at 4–144; sequence GMNKILPSLF…LEDFGKHDVY (141 aa). C88 serves as the catalytic Phosphocysteine intermediate. The segment at 170 to 193 is disordered; that stretch reads DKHKQQEAAESQSATSSGRQWSSH. The span at 177–193 shows a compositional bias: low complexity; that stretch reads AAESQSATSSGRQWSSH.

It belongs to the protein-tyrosine phosphatase family. Non-receptor class dual specificity subfamily.

The protein resides in the cytoplasm. It localises to the nucleus. The catalysed reaction is O-phospho-L-tyrosyl-[protein] + H2O = L-tyrosyl-[protein] + phosphate. The enzyme catalyses O-phospho-L-seryl-[protein] + H2O = L-seryl-[protein] + phosphate. It catalyses the reaction O-phospho-L-threonyl-[protein] + H2O = L-threonyl-[protein] + phosphate. In terms of biological role, activates the Jnk signaling pathway. Dephosphorylates and deactivates p38 and stress-activated protein kinase/c-Jun N-terminal kinase (SAPK/JNK). The protein is Dual specificity protein phosphatase 22 (dusp22) of Xenopus tropicalis (Western clawed frog).